A 143-amino-acid chain; its full sequence is Transcriptional regulator SlyA (143 aa).

The region spanning 2–135 (ESTLGSDLAR…LANLIERLEQ (134 aa)) is the HTH marR-type domain. Positions 49–72 (QIQLAKAIGIEQPSLVRTLDQLED) form a DNA-binding region, H-T-H motif.

Belongs to the SlyA family. In terms of assembly, homodimer.

Its function is as follows. Transcription regulator that can specifically activate or repress expression of target genes. The sequence is that of Transcriptional regulator SlyA from Edwardsiella ictaluri (strain 93-146).